We begin with the raw amino-acid sequence, 382 residues long: Lipid-A-disaccharide synthase (382 aa).

It belongs to the LpxB family.

It carries out the reaction 2-N,3-O-bis[(3R)-3-hydroxytetradecanoyl]-alpha-D-glucosaminyl 1-phosphate + UDP-2-N,3-O-bis[(3R)-3-hydroxytetradecanoyl]-alpha-D-glucosamine = lipid A disaccharide (E. coli) + UDP + H(+). The catalysed reaction is a lipid X + a UDP-2-N,3-O-bis[(3R)-3-hydroxyacyl]-alpha-D-glucosamine = a lipid A disaccharide + UDP + H(+). It participates in glycolipid biosynthesis; lipid IV(A) biosynthesis; lipid IV(A) from (3R)-3-hydroxytetradecanoyl-[acyl-carrier-protein] and UDP-N-acetyl-alpha-D-glucosamine: step 5/6. Functionally, condensation of UDP-2,3-diacylglucosamine and 2,3-diacylglucosamine-1-phosphate to form lipid A disaccharide, a precursor of lipid A, a phosphorylated glycolipid that anchors the lipopolysaccharide to the outer membrane of the cell. In Salmonella heidelberg (strain SL476), this protein is Lipid-A-disaccharide synthase.